The sequence spans 500 residues: NAD(P)H-quinone oxidoreductase subunit 2 A, chloroplastic (500 aa).

The next 13 helical transmembrane spans lie at 14–34 (LLLF…GLIL), 47–67 (IPWF…ALLF), 89–109 (IFQF…VEYI), 114–134 (MAIT…MFLC), 139–159 (FITI…LSGY), 173–193 (YLLM…WLYG), 217–237 (PGIS…LSPA), 285–305 (WHLL…LIAI), 313–333 (MLAY…IVGD), 344–364 (YMLF…LFGL), 385–405 (ALSL…AGFF), 408–428 (LHLF…IGLL), and 474–494 (MIVC…IIAI).

It belongs to the complex I subunit 2 family. NDH is composed of at least 16 different subunits, 5 of which are encoded in the nucleus.

It localises to the plastid. It is found in the chloroplast thylakoid membrane. It catalyses the reaction a plastoquinone + NADH + (n+1) H(+)(in) = a plastoquinol + NAD(+) + n H(+)(out). It carries out the reaction a plastoquinone + NADPH + (n+1) H(+)(in) = a plastoquinol + NADP(+) + n H(+)(out). NDH shuttles electrons from NAD(P)H:plastoquinone, via FMN and iron-sulfur (Fe-S) centers, to quinones in the photosynthetic chain and possibly in a chloroplast respiratory chain. The immediate electron acceptor for the enzyme in this species is believed to be plastoquinone. Couples the redox reaction to proton translocation, and thus conserves the redox energy in a proton gradient. This is NAD(P)H-quinone oxidoreductase subunit 2 A, chloroplastic from Pelargonium hortorum (Common geranium).